A 1050-amino-acid chain; its full sequence is Collagen alpha-2(I) chain (1050 aa).

The tract at residues 1–1050 (SGGFDFSFLP…FGYEGDFYRA (1050 aa)) is disordered. 4-hydroxyproline is present on residues P10 and P13. A compositionally biased stretch (gly residues) spans 20–32 (RYYGVGLGPGPMG). Low complexity-rich tracts occupy residues 33 to 46 (LMGP…SGAP) and 56 to 77 (EPGE…APGK). A 4-hydroxyproline mark is found at P40 and P46. The segment covering 78–92 (AGEDGHPGKPGRPGE) has biased composition (basic and acidic residues). K114 carries the post-translational modification 5-hydroxylysine; alternate. Residue K114 is glycosylated (O-linked (Gal...) hydroxylysine; alternate). Low complexity-rich tracts occupy residues 161–190 (VGAP…SAGP), 236–257 (PGAN…AGAP), 298–311 (EPGS…PGSS), 320–338 (NGES…RGNP), and 355–371 (PAGA…RGPS). A 4-hydroxyproline mark is found at P377 and P380. Composition is skewed to low complexity over residues 406-425 (LPGI…RGEA) and 452-467 (AGNR…NGAQ). Over residues 474–483 (GVQGGKGEQG) the composition is skewed to gly residues. 3 stretches are compositionally biased toward low complexity: residues 530–547 (PGES…SRGP), 598–642 (VGTT…PRGS), and 649–669 (VGPA…QPGA). The segment covering 670–679 (KGERGTKGPK) has biased composition (basic and acidic residues). Positions 687–697 (PTGPVGSAGPA) are enriched in low complexity. The span at 707–716 (GSRGDGGPPG) shows a compositional bias: gly residues. Residues 718–727 (TGFPGAAGRT) show a composition bias toward low complexity. A compositionally biased stretch (gly residues) spans 764 to 773 (GETGAGGPPG). 4 stretches are compositionally biased toward low complexity: residues 781-808 (SGEP…LGLP), 816-841 (LPGV…RGPS), 881-903 (YAGN…VGPA), and 911-926 (EPGP…ALGP). A compositionally biased stretch (basic and acidic residues) spans 936–947 (RGDKGEPGDKGP). A compositionally biased stretch (pro residues) spans 1020–1032 (SGPPGPPGPPGPP).

Belongs to the fibrillar collagen family. In terms of assembly, trimers of one alpha 2(I) and two alpha 1(I) chains. Interacts (via C-terminus) with TMEM131 (via PapD-L domain); the interaction is direct and is involved in assembly and TRAPPIII ER-to-Golgi transport complex-dependent secretion of collagen. In terms of processing, prolines at the third position of the tripeptide repeating unit (G-X-Y) are hydroxylated in some or all of the chains. Expressed in bones.

The protein localises to the secreted. Its subcellular location is the extracellular space. It is found in the extracellular matrix. Functionally, type I collagen is a member of group I collagen (fibrillar forming collagen). This is Collagen alpha-2(I) chain from Megatherium americanum (Giant ground sloth).